We begin with the raw amino-acid sequence, 128 residues long: Fluoride-specific ion channel FluC (128 aa).

4 helical membrane-spanning segments follow: residues 8 to 28 (IIFI…LGLL), 38 to 58 (LGTL…LAFF), 71 to 91 (FFVT…AEVI), and 103 to 123 (LMLA…GVFI). Residues glycine 78 and threonine 81 each contribute to the Na(+) site.

This sequence belongs to the fluoride channel Fluc/FEX (TC 1.A.43) family.

The protein localises to the cell inner membrane. The enzyme catalyses fluoride(in) = fluoride(out). Its activity is regulated as follows. Na(+) is not transported, but it plays an essential structural role and its presence is essential for fluoride channel function. In terms of biological role, fluoride-specific ion channel. Important for reducing fluoride concentration in the cell, thus reducing its toxicity. In Pasteurella multocida (strain Pm70), this protein is Fluoride-specific ion channel FluC.